We begin with the raw amino-acid sequence, 88 residues long: Small ribosomal subunit protein uS15 (88 aa).

The protein belongs to the universal ribosomal protein uS15 family. Part of the 30S ribosomal subunit. Forms a bridge to the 50S subunit in the 70S ribosome, contacting the 23S rRNA.

Functionally, one of the primary rRNA binding proteins, it binds directly to 16S rRNA where it helps nucleate assembly of the platform of the 30S subunit by binding and bridging several RNA helices of the 16S rRNA. Its function is as follows. Forms an intersubunit bridge (bridge B4) with the 23S rRNA of the 50S subunit in the ribosome. This chain is Small ribosomal subunit protein uS15, found in Leptospira biflexa serovar Patoc (strain Patoc 1 / Ames).